A 519-amino-acid chain; its full sequence is Transcription factor STP1 (519 aa).

Residues 16 to 35 form an i region; the sequence is IPGKIYAFFRELVSGVIISK. Positions 47–61 are enriched in basic and acidic residues; that stretch reads ATKEEGKDAADEEKT. 2 disordered regions span residues 47 to 69 and 115 to 150; these read ATKEEGKDAADEEKTTTSLFPES and LLGSRPEQDTGAPIKMSTGVTSSPLSPSGSTPEHST. An II region spans residues 65–97; the sequence is LFPESNNIDRSLNGGCSVIPCSMDVSDLNTPIS. The span at 131–146 shows a compositional bias: low complexity; sequence STGVTSSPLSPSGSTP. A C2H2-type 1 zinc finger spans residues 160–182; the sequence is FICHYCDATFRIRGYLTRHIKKH. A C2H2-type 2; atypical zinc finger spans residues 188-223; the sequence is YHCPFFNSATPPDLRCHNSGGFSRRDTYKTHLKARH. A C2H2-type 3; atypical zinc finger spans residues 240–265; that stretch reads GHCAQCGEYFSTIENFVENHIESGDC. The interval 357-382 is disordered; the sequence is IKKKQQQVSGSTVTTPEVATQNNQEV. Residues 364–381 show a composition bias toward polar residues; it reads VSGSTVTTPEVATQNNQE.

In terms of assembly, interacts (via Region II) with SSY5; protease component of the SPS-sensor. Post-translationally, phosphorylated by casein kinase I. Phosphorylation is not dependent on the extracellular amino acid levels, but is a prerequisite for proteolytic processing. Activated by the amino acid-induced proteolytic removal of an N-terminal inhibitory domain by serine protease SSY5, an intrinsic component of the SPS-sensor. Processing requires at least 2 components of the SCF(GRR1) ubiquitin ligase complex, namely the F-box protein GRR1 and the E2 enzyme CDC34, but does not depend on the proteasome. Processing is negatively regulated by the protein phosphatase 2A regulatory subunit RTS1.

It localises to the cell membrane. It is found in the nucleus. Functionally, transcription factor involved in the regulation of gene expression in response to extracellular amino acid levels. Synthesized as latent cytoplasmic precursor, which, upon a signal initiated by the plasma membrane SPS (SSY1-PTR3-SSY5) amino acid sensor system, becomes proteolytically activated and relocates to the nucleus, where it induces the expression of SPS-sensor-regulated genes, including the amino-acid permeases AGP1, BAP2, BAP3 and GNP1. Binding to promoters is facilitated by DAL81. Involved in the repression of genes subject to nitrogen catabolite repression and genes involved in stress response. Negatively regulated by inner nuclear membrane proteins ASI1, ASI2 and ASI3, which prevent unprocessed precursor forms that escape cytoplasmic anchoring from inducing SPS-sensor-regulated genes. May be involved in pre-tRNA splicing. The polypeptide is Transcription factor STP1 (STP1) (Saccharomyces cerevisiae (strain RM11-1a) (Baker's yeast)).